A 914-amino-acid chain; its full sequence is Isoleucine--tRNA ligase (914 aa).

The 'HIGH' region signature appears at 64 to 74; sequence PYANGNFHLGH. Glutamate 557 provides a ligand contact to L-isoleucyl-5'-AMP. The 'KMSKS' region motif lies at 598-602; that stretch reads AMSKS. Lysine 601 is a binding site for ATP. Zn(2+) is bound by residues cysteine 889, cysteine 892, cysteine 906, and cysteine 909.

The protein belongs to the class-I aminoacyl-tRNA synthetase family. IleS type 1 subfamily. In terms of assembly, monomer. Requires Zn(2+) as cofactor.

The protein resides in the cytoplasm. It carries out the reaction tRNA(Ile) + L-isoleucine + ATP = L-isoleucyl-tRNA(Ile) + AMP + diphosphate. Catalyzes the attachment of isoleucine to tRNA(Ile). As IleRS can inadvertently accommodate and process structurally similar amino acids such as valine, to avoid such errors it has two additional distinct tRNA(Ile)-dependent editing activities. One activity is designated as 'pretransfer' editing and involves the hydrolysis of activated Val-AMP. The other activity is designated 'posttransfer' editing and involves deacylation of mischarged Val-tRNA(Ile). This Leptospira borgpetersenii serovar Hardjo-bovis (strain JB197) protein is Isoleucine--tRNA ligase.